Reading from the N-terminus, the 350-residue chain is Leucine-rich repeat-containing protein 58 (350 aa).

10 LRR repeats span residues 14–34 (NLTHLGLENLNLELVSENKRK), 35–56 (DVQQILLPHNRLVVLPPLVASF), 58–80 (HLHLLDISNNNMVYIGEEILGLT), 81–102 (KLKTLLAKNNRLDEFSFPKEMG), 105–125 (RLEVLNLSGNRFEEIPDQFLQ), 128–149 (TLKSLSLGGNRLKSIPAEIENL), 151–173 (SLEFLYLGGNFISSIPSELANLP), 174–195 (YLSYLVLCDNRIQSIPPQLAQV), 197–218 (SLRSLSLHNNLLTYLPREILSL), and 220–240 (HLHELSLRGNPLVVRFVRDLT).

The chain is Leucine-rich repeat-containing protein 58 (lrrc58) from Xenopus laevis (African clawed frog).